The primary structure comprises 406 residues: HEAT repeat-containing taxis protein OE_2401F (406 aa).

7 HEAT repeats span residues 7 to 41, 42 to 78, 90 to 127, 153 to 184, 185 to 215, 216 to 252, and 370 to 406; these read LERS…NLDE, PEPE…VDAL, GATW…EDTA, IEQP…LGRL, TTEQ…LGRF, ETAE…NVPP, and VGGD…GGKT.

Interacts with chemotaxis (Che) proteins.

In terms of biological role, involved in taxis signal transduction. Essential for the ability to control the direction of flagellar rotation. May have a role between CheY and the flagellum. The sequence is that of HEAT repeat-containing taxis protein OE_2401F from Halobacterium salinarum (strain ATCC 29341 / DSM 671 / R1).